The primary structure comprises 452 residues: C4-dicarboxylate transport protein 1 (452 aa).

A run of 9 helical transmembrane segments spans residues 18–38, 51–71, 83–103, 151–171, 191–211, 229–249, 304–324, 337–357, and 359–379; these read FQVVCAVIAGVALGYFYPSVG, LIKMMIAPIIFCTVVVGIAGM, LALLYFEVVSTFALIIGLLLV, AFAKGEILQVLLLAILFGFAL, VLFTIVGFIMKVAPIGAFGAM, LMGAFYLTCLIFIFGVLGAIA, GYSFNLDGTSIYLTMAAVFIA, ITLLGVLLLTSKGAAGVTGSG, and IVLAATLSAVGTVPVAGLALI. The segment at 426-452 is disordered; that stretch reads WEEAQEPERVLDKKTEHMPVSAMSDAG. Positions 431–442 are enriched in basic and acidic residues; the sequence is EPERVLDKKTEH.

It belongs to the dicarboxylate/amino acid:cation symporter (DAACS) (TC 2.A.23) family.

The protein resides in the cell inner membrane. Its function is as follows. Responsible for the transport of dicarboxylates such as succinate, fumarate, and malate from the periplasm across the membrane. This chain is C4-dicarboxylate transport protein 1, found in Polaromonas naphthalenivorans (strain CJ2).